Consider the following 443-residue polypeptide: Carboxypeptidase M (443 aa).

The first 17 residues, Met-1–Ala-17, serve as a signal peptide directing secretion. The Peptidase M14 domain maps to Asn-21–Val-311. A glycan (N-linked (GlcNAc...) asparagine) is linked at Asn-38. The Zn(2+) site is built by His-83 and Glu-86. N-linked (GlcNAc...) asparagine glycans are attached at residues Asn-115 and Asn-164. 3 cysteine pairs are disulfide-bonded: Cys-138-Cys-285, Cys-242-Cys-284, and Cys-341-Cys-410. Zn(2+) is bound at residue His-190. Glu-281 functions as the Proton donor/acceptor in the catalytic mechanism. Asn-363 and Asn-384 each carry an N-linked (GlcNAc...) asparagine glycan. The GPI-anchor amidated serine moiety is linked to residue Ser-423. Positions Ala-424 to Lys-443 are cleaved as a propeptide — removed in mature form.

The protein belongs to the peptidase M14 family. It depends on Zn(2+) as a cofactor.

The protein resides in the cell membrane. It catalyses the reaction Cleavage of C-terminal arginine or lysine residues from polypeptides.. Inhibited by O-phenanthroline and MGTA and activated by cobalt. Functionally, specifically removes C-terminal basic residues (Arg or Lys) from peptides and proteins. It is believed to play important roles in the control of peptide hormone and growth factor activity at the cell surface, and in the membrane-localized degradation of extracellular proteins. The chain is Carboxypeptidase M (CPM) from Homo sapiens (Human).